The following is a 1650-amino-acid chain: HEAT repeat-containing protein 1 homolog (1650 aa).

The disordered stretch occupies residues 1183-1210 (QYDSAASPGSSVAGGRGNRGHRIRQQSL). One copy of the HEAT repeat lies at 1609–1645 (LLPFLNELIEDENKQVEAQCQKVINSLQHKFGETFWS).

It belongs to the HEATR1/UTP10 family.

The protein resides in the nucleus. It localises to the nucleolus. Involved in nucleolar processing of pre-18S ribosomal RNA. Involved in ribosome biosynthesis. This is HEAT repeat-containing protein 1 homolog (toe-1) from Caenorhabditis elegans.